A 183-amino-acid polypeptide reads, in one-letter code: Inner membrane protein YgjV (183 aa).

Residues M1–T2 are Periplasmic-facing. A helical membrane pass occupies residues A3–F23. Residues N24–S38 are Cytoplasmic-facing. Residues A39–L59 traverse the membrane as a helical segment. The Periplasmic segment spans residues N60–R71. 2 helical membrane passes run S72–H92 and H93–C113. Topologically, residues K114–N133 are periplasmic. Residues F134–L154 traverse the membrane as a helical segment. Residues N155–G183 lie on the Cytoplasmic side of the membrane.

The protein resides in the cell inner membrane. In Escherichia coli (strain K12), this protein is Inner membrane protein YgjV (ygjV).